Reading from the N-terminus, the 243-residue chain is Cell division protein ZipA (243 aa).

The Periplasmic portion of the chain corresponds to 1-4; the sequence is MSDM. The chain crosses the membrane as a helical span at residues 5 to 25; the sequence is AMIRIGILIAGLLLVAAIFLF. The Cytoplasmic segment spans residues 26-243; the sequence is GRPKKSPQGR…APPLTKSPRW (218 aa). The interval 30-89 is disordered; sequence KSPQGRRVDKDEGQPRERREPVISSEFGVEDDAAERAEGVEQSELNLEGQDASGGNEVGK. The segment covering 35 to 50 has biased composition (basic and acidic residues); the sequence is RRVDKDEGQPRERREP.

Belongs to the ZipA family. As to quaternary structure, interacts with FtsZ via their C-terminal domains.

It localises to the cell inner membrane. Its function is as follows. Essential cell division protein that stabilizes the FtsZ protofilaments by cross-linking them and that serves as a cytoplasmic membrane anchor for the Z ring. Also required for the recruitment to the septal ring of downstream cell division proteins. This Xanthomonas euvesicatoria pv. vesicatoria (strain 85-10) (Xanthomonas campestris pv. vesicatoria) protein is Cell division protein ZipA.